Reading from the N-terminus, the 451-residue chain is MAQRYDEMVHYPGLDGMSLAGFADAHTGRALQHHSLSQSTPYGSTGAAHRVPMPPGMGSNDGLKREKDEIYGHPLFPLLALVFEKCELATCSPRDNSGSFPGGDVCSSDSFNEDIAVFAKQVRTEKPLFSSNPELDNLMIQAIQVLRFHLLELEKVHDLCDNFCHRYITCLKGKMPIDLVIDDRDGSSKSDLEDFTGSCTSLSDQNNTWIRDHDETGSTHSGTPGPSSGGLASQSGDNSSEQGDCMDNSVASPSTGDDDDLDRDKKRNKKRGIFPKVATNIMRAWLFQHLSHPYPSEEQKKQLAQDTGLTILQVNNWFINARRRIVQPMIDQSNRTGQGGAPYSPDGQNMGGYVMDGQQHMGIRPPGFQGIPGDYTAAPSTMPMGFPPAGYTPAIPPHSAGLRHGPSLHSYLPGHPHSMILPAGASPHHLVSAQSPADALLNGQNIDIHAH.

A disordered region spans residues 33-64 (HHSLSQSTPYGSTGAAHRVPMPPGMGSNDGLK). Polar residues predominate over residues 34–43 (HSLSQSTPYG). One can recognise an MEIS N-terminal domain in the interval 102–185 (GGDVCSSDSF…PIDLVIDDRD (84 aa)). The disordered stretch occupies residues 206–272 (NNTWIRDHDE…RDKKRNKKRG (67 aa)). Positions 218-230 (STHSGTPGPSSGG) are enriched in low complexity. A compositionally biased stretch (polar residues) spans 231–242 (LASQSGDNSSEQ). The homeobox DNA-binding region spans 267-329 (RNKKRGIFPK…NARRRIVQPM (63 aa)).

Belongs to the TALE/MEIS homeobox family.

The protein localises to the nucleus. Its function is as follows. A caudalizing protein which is required to pattern the anterior/posterior (A/P) axis during central nervous system (CNS) formation. Inhibits anterior neural expression and acts as a transcriptional activator to induce posterior neural gene expression. Maintains a proper A/P balance required for hindbrain formation by activating the FGF/MAPK pathway, which modulates the planar cell polarity (PCP) pathway. Interacts with retinoid signaling during hindbrain patterning. This is Homeobox protein meis3-B (meis3-b) from Xenopus laevis (African clawed frog).